Consider the following 312-residue polypeptide: Ribonuclease Z (312 aa).

H63, H65, D67, H68, H140, D211, and H269 together coordinate Zn(2+). The Proton acceptor role is filled by D67.

Belongs to the RNase Z family. Homodimer. It depends on Zn(2+) as a cofactor.

The catalysed reaction is Endonucleolytic cleavage of RNA, removing extra 3' nucleotides from tRNA precursor, generating 3' termini of tRNAs. A 3'-hydroxy group is left at the tRNA terminus and a 5'-phosphoryl group is left at the trailer molecule.. Functionally, zinc phosphodiesterase, which displays some tRNA 3'-processing endonuclease activity. Probably involved in tRNA maturation, by removing a 3'-trailer from precursor tRNA. This Anoxybacillus flavithermus (strain DSM 21510 / WK1) protein is Ribonuclease Z.